We begin with the raw amino-acid sequence, 406 residues long: NIPA-like protein 3 (406 aa).

Transmembrane regions (helical) follow at residues 33–53 (NLIGALLAIFGHLVVSIALNL), 76–96 (WWLGLFLMLLGELGVFASYAF), 101–121 (LIVPLSAVSVIASAIIGIIFI), and 135–155 (VLSFVGCGLAVVGTYLLVTFA). The N-linked (GlcNAc...) asparagine glycan is linked to asparagine 166. 5 helical membrane passes run 171–191 (LVSWPFLLYMLVEIILFCLLL), 202–222 (IVVILLLVALLGSMTVVTVKA), 240–260 (PIFYVMFVCMVATAVYQAAFL), 271–291 (LIASVGYILSTTIAITAGAIF), and 300–320 (VLHICMFALGCLIAFLGVFLI). Serine 372 is modified (phosphoserine).

Belongs to the NIPA family.

The protein localises to the membrane. In Homo sapiens (Human), this protein is NIPA-like protein 3 (NIPAL3).